The sequence spans 166 residues: uncharacterized protein (166 aa).

3 consecutive 4Fe-4S ferredoxin-type domains span residues 44–73, 75–104, and 139–166; these read ARED…LKQQ, ATLE…PNFP, and STLE…ITLK. Residues C53, C56, C59, C63, C84, C87, C90, and C94 each contribute to the [4Fe-4S] cluster site.

This is an uncharacterized protein from Haemophilus influenzae (strain ATCC 51907 / DSM 11121 / KW20 / Rd).